The sequence spans 417 residues: Dibenzothiophene monooxygenase (417 aa).

Positions 18–124 are helical N-terminus; sequence NDPVAVARGL…HLYTQIAQNN (107 aa). Residues Tyr96, 129 to 134, 159 to 163, Arg282, 369 to 370, and His391 contribute to the FMN site; these read NASSEN, KHFCS, and AR. The interval 125–233 is central beta-barrel N-terminus; it reads WWTGNASSEN…KVEPDEVLGA (109 aa). Residues 131-142 form a lid loop region; sequence SSENNSHVLDWK. The interval 234-417 is helical C-terminus; sequence PNAFVLAFIQ…GQYPIPGFTS (184 aa).

This sequence belongs to the DszC flavin monooxygenase family. In terms of assembly, homotetramer formed by a dimer of dimers; FMN binds between monomers of the homodimer.

The protein resides in the cytoplasm. It catalyses the reaction dibenzothiophene + 2 FMNH2 + 2 O2 = dibenzothiophene 5,5-dioxide + 2 FMN + 2 H2O + 2 H(+). The catalysed reaction is dibenzothiophene + FMNH2 + O2 = dibenzothiophene 5-oxide + FMN + H2O + H(+). It carries out the reaction dibenzothiophene 5-oxide + FMNH2 + O2 = dibenzothiophene 5,5-dioxide + FMN + H2O + H(+). It functions in the pathway sulfur metabolism; dibenzothiophene degradation. Its activity is regulated as follows. DBT degradation completely inhibited by Cu(2+), Mn(2+), p-chloromercuribenzoic acid, 2,2-bipyridyl, 1,10-phenanthroline, and strongly inhibited by Zn(2+), 5,5'- Dithiobis(2-nitrobenzoic acid) and 8-quinolinol. In terms of biological role, catalyzes the first step of the '4S' desulfurization pathway that removes covalently bound sulfur from dibenzothiophene (DBT) without breaking carbon-carbon bonds. Sulfur dioxygenase which converts DBT to DBT-sulfone (DBTO2 or DBT 5,5-dioxide) in a stepwise manner. Also acts on thioxanthen-9-one and 4,6-dimethyl DBT and 2,8-dimethyl DBT. This Rhodococcus erythropolis (Arthrobacter picolinophilus) protein is Dibenzothiophene monooxygenase.